The following is a 325-amino-acid chain: MDEFDLIHSITPRTIHHSSVDVGIGDDAALYTAKHGVQEIVCVDTMVEDVHFKLHYSSPEDIGYKALAVNISDIAAMGGIPKFYLVSLAVPSKWTESEIKAMYEGMNELAKLYHMDLIGGDTVSTADKLVVTVTVIGEIEKGQACLRSLAKPNDIVFVTGEIGSSAAGLSLLLEETNPQNSSVETDYFIHRHKRPEPRVSVGRLCSIFKRAALNDVSDGLASELNEIAEASCVSIEIVESMLPIHSDLPKLHPNWKEWALFGGEDFELTGTVSNEEWEVLKQECAALHLPITKIGYVREKTKSKVILKTDQTSMILEKKGYNHFK.

Residues D27 and D44 each coordinate Mg(2+). Residue H51 participates in substrate binding. Mg(2+) is bound at residue D73. ATP contacts are provided by residues Y103, 120 to 121 (GD), and R147. D121 lines the Mg(2+) pocket. D215 is a binding site for Mg(2+). S217 contacts ATP. D218 is a binding site for Mg(2+). E264 and Y321 together coordinate substrate.

Belongs to the thiamine-monophosphate kinase family.

It catalyses the reaction thiamine phosphate + ATP = thiamine diphosphate + ADP. It participates in cofactor biosynthesis; thiamine diphosphate biosynthesis; thiamine diphosphate from thiamine phosphate: step 1/1. Catalyzes the ATP-dependent phosphorylation of thiamine-monophosphate (TMP) to form thiamine-pyrophosphate (TPP), the active form of vitamin B1. The protein is Thiamine-monophosphate kinase of Bacillus subtilis (strain 168).